The primary structure comprises 175 residues: Arsenite oxidase subunit AioB (175 aa).

Positions M1–A32 form a signal peptide, tat-type signal. In terms of domain architecture, Rieske spans N62–L158. Residues C102, H104, C120, and H123 each contribute to the [2Fe-2S] cluster site. C107 and C122 are joined by a disulfide.

The protein belongs to the AOX family. In terms of assembly, heterodimer consisting of a large and a small subunit. Requires [2Fe-2S] cluster as cofactor. Predicted to be exported by the Tat system. The position of the signal peptide cleavage has not been experimentally proven.

The enzyme catalyses 2 oxidized [azurin] + arsenite + H2O = 2 reduced [azurin] + arsenate + 3 H(+). Involved in the detoxification of arsenic. Oxidizes As(III)O3(3-) (arsenite) to the somewhat less toxic As(V)O4(3-) (arsenate). In Alcaligenes faecalis, this protein is Arsenite oxidase subunit AioB (aioB).